We begin with the raw amino-acid sequence, 375 residues long: Peptidyl-prolyl cis-trans isomerase D (375 aa).

Positions 7–169 (YFDITIANEP…QAVTISSAGV (163 aa)) constitute a PPIase cyclophilin-type domain. TPR repeat units follow at residues 217-250 (AGKL…LDVH), 270-307 (LPLL…PNLS), and 312-345 (GKAL…VPGD).

This sequence belongs to the cyclophilin-type PPIase family. PPIase D subfamily.

The protein resides in the cytoplasm. It carries out the reaction [protein]-peptidylproline (omega=180) = [protein]-peptidylproline (omega=0). Its function is as follows. PPIases accelerate the folding of proteins. It catalyzes the cis-trans isomerization of proline imidic peptide bonds in oligopeptides. The polypeptide is Peptidyl-prolyl cis-trans isomerase D (CPR6) (Cryptococcus neoformans var. neoformans serotype D (strain JEC21 / ATCC MYA-565) (Filobasidiella neoformans)).